A 66-amino-acid polypeptide reads, in one-letter code: Alpha-conotoxin RegIIA (66 aa).

Positions 1–21 (MGMRMMFTVFLLVVLTTTVVS) are cleaved as a signal peptide. A propeptide spanning residues 22-49 (STSVRASDGRNAAADNRASDLIAQIVRR) is cleaved from the precursor. Intrachain disulfides connect C51/C57 and C52/C65. A ser-Xaa-Pro motif, crucial for potent interaction with nAChR region spans residues 53-55 (SHP). At C65 the chain carries Cysteine amide.

This sequence belongs to the conotoxin A superfamily. As to expression, expressed by the venom duct.

The protein resides in the secreted. In terms of biological role, alpha-conotoxins act on postsynaptic membranes, they bind to the nicotinic acetylcholine receptors (nAChR) and thus inhibit them. This toxin potently inhibits alpha-3 containing subunit nAChR. It inhibits alpha-3-beta-2/CHRNA3-CHRNB2 (IC(50)=10.7-33 nM (rat)/132.4-704.1 nM (human)) and alpha-3-beta-4/CHRNA3-CHRNB4 (IC(50)=47.3-97 nM (rat)/52.1 nM (human)). It also inhibits alpha-7/CHRNA7 nAChR with IC(50)=103-210 nM (human)/41-61.2 nM (rat) nAChRs. It is more potent on alpha-3-beta-2 receptors in human than in rat, due to a variation (Pro vs Gln) in alpha-3 subunit in these orthologs. Conversely, does not show species-specific differences in sensitivity at the alpha-3-beta-4 receptor. This Conus regius (Crown cone) protein is Alpha-conotoxin RegIIA.